The primary structure comprises 158 residues: NAD(P)H-quinone oxidoreductase subunit J, chloroplastic (158 aa).

The protein belongs to the complex I 30 kDa subunit family. NDH is composed of at least 16 different subunits, 5 of which are encoded in the nucleus.

It is found in the plastid. The protein resides in the chloroplast thylakoid membrane. The catalysed reaction is a plastoquinone + NADH + (n+1) H(+)(in) = a plastoquinol + NAD(+) + n H(+)(out). It carries out the reaction a plastoquinone + NADPH + (n+1) H(+)(in) = a plastoquinol + NADP(+) + n H(+)(out). In terms of biological role, NDH shuttles electrons from NAD(P)H:plastoquinone, via FMN and iron-sulfur (Fe-S) centers, to quinones in the photosynthetic chain and possibly in a chloroplast respiratory chain. The immediate electron acceptor for the enzyme in this species is believed to be plastoquinone. Couples the redox reaction to proton translocation, and thus conserves the redox energy in a proton gradient. In Aethionema grandiflorum (Persian stone-cress), this protein is NAD(P)H-quinone oxidoreductase subunit J, chloroplastic.